The primary structure comprises 173 residues: dCTP deaminase, dUMP-forming (173 aa).

DCTP contacts are provided by residues Arg93–Arg98, Asp111, Thr119–Glu121, Gln138, and Tyr151. Glu121 acts as the Proton donor/acceptor in catalysis.

Belongs to the dCTP deaminase family. In terms of assembly, homotrimer.

It catalyses the reaction dCTP + 2 H2O = dUMP + NH4(+) + diphosphate. Its pathway is pyrimidine metabolism; dUMP biosynthesis; dUMP from dCTP: step 1/1. Functionally, bifunctional enzyme that catalyzes both the deamination of dCTP to dUTP and the hydrolysis of dUTP to dUMP without releasing the toxic dUTP intermediate. The chain is dCTP deaminase, dUMP-forming from Clostridium beijerinckii (strain ATCC 51743 / NCIMB 8052) (Clostridium acetobutylicum).